A 418-amino-acid polypeptide reads, in one-letter code: GTPase Obg (418 aa).

One can recognise an Obg domain in the interval 1 to 156 (MKFIDEITLN…KKLTLVLKVL (156 aa)). The 168-residue stretch at 157-324 (ADVGFVGKPS…LKEALWQSVK (168 aa)) folds into the OBG-type G domain. GTP contacts are provided by residues 163-170 (GKPSAGKS), 188-192 (FTTLV), 209-212 (DLPG), 278-281 (NKKD), and 305-307 (SAL). Positions 170 and 190 each coordinate Mg(2+). An OCT domain is found at 339 to 417 (VFINFEADFN…IYDYEFVWGN (79 aa)).

It belongs to the TRAFAC class OBG-HflX-like GTPase superfamily. OBG GTPase family. As to quaternary structure, monomer. Mg(2+) serves as cofactor.

The protein resides in the cytoplasm. Functionally, an essential GTPase which binds GTP, GDP and possibly (p)ppGpp with moderate affinity, with high nucleotide exchange rates and a fairly low GTP hydrolysis rate. Plays a role in control of the cell cycle, stress response, ribosome biogenesis and in those bacteria that undergo differentiation, in morphogenesis control. The chain is GTPase Obg from Mycoplasmopsis pulmonis (strain UAB CTIP) (Mycoplasma pulmonis).